We begin with the raw amino-acid sequence, 724 residues long: Small conductance calcium-activated potassium channel protein 3 (724 aa).

Over residues 1-11 (MDTSGHFHDSG) the composition is skewed to basic and acidic residues. Disordered regions lie at residues 1 to 161 (MDTS…RDSN) and 232 to 251 (ATHN…FPKA). Positions 34-58 (QPPPPPPPPAPPAAPQQPPGPPLQP) are enriched in pro residues. Residues 59–88 (QPLQLQQQQQQQQQQPPHPLSQLAQLQSQP) are compositionally biased toward low complexity. Residues 105 to 125 (PSSNSTAILHPSSRQGSQLNL) are compositionally biased toward polar residues. A compositionally biased stretch (low complexity) spans 131 to 140 (GHSPSSTATS). The residue at position 160 (serine 160) is a Phosphoserine. A compositionally biased stretch (polar residues) spans 232-249 (ATHNHQHAGTTASSTTFP). The helical transmembrane segment at 281-301 (LIFGMFGIVVMVIETELSWGL) threads the bilayer. A helical transmembrane segment spans residues 308–328 (FSLALKCLISLSTIILLGLII). A helical membrane pass occupies residues 359–379 (ISLEMLVCAIHPIPGEYKFFW). Residues 398 to 418 (IILSIPMFLRLYLIARVMLLH) form a helical membrane-spanning segment. The helical transmembrane segment at 447-467 (LMTICPGTVLLVFSISLWIIA) threads the bilayer. Positions 487 to 507 (FLGAMWLISITFLSIGYGDMV) form an intramembrane region, pore-forming. A helical transmembrane segment spans residues 516–536 (VCLLTGIMGAGCTALVVAVVA). A calmodulin-binding region spans residues 554–630 (DTQLTKRIKN…LVDLSKMQNV (77 aa)). Residues 635–662 (ITELNDRSEDLEKQIGSLESKLEHLTAS) are a coiled coil. The tract at residues 702–724 (LSDSPIGVSSTSFPTPYTSSSSC) is disordered. The segment covering 710–724 (SSTSFPTPYTSSSSC) has biased composition (low complexity).

Belongs to the potassium channel KCNN family. KCa2.3/KCNN3 subfamily. In terms of assembly, homodimer. Heteromultimer with KCNN2 or KCNN1; this modulates plasma membrane expression and consequently the small conductance calcium-activated potassium channel activity. The complex is composed of 4 channel subunits each of which binds to a calmodulin subunit which regulates the channel activity through calcium-binding. Interacts with CALM1.

The protein resides in the cell membrane. The protein localises to the cytoplasm. Its subcellular location is the myofibril. It localises to the sarcomere. It is found in the z line. The enzyme catalyses K(+)(in) = K(+)(out). Inhibited by bee venom neurotoxin apamin. In terms of biological role, small conductance calcium-activated potassium channel that mediates the voltage-independent transmembrane transfer of potassium across the cell membrane through a constitutive interaction with calmodulin which binds the intracellular calcium allowing its opening. The current is characterized by a voltage-independent activation, an intracellular calcium concentration increase-dependent activation and a single-channel conductance of 10 picosiemens. Also presents an inwardly rectifying current, thus reducing its already small outward conductance of potassium ions, which is particularly the case when the membrane potential displays positive values, above + 20 mV. Activation is followed by membrane hyperpolarization. Thought to regulate neuronal excitability by contributing to the slow component of synaptic afterhyperpolarization. This chain is Small conductance calcium-activated potassium channel protein 3, found in Sus scrofa (Pig).